The chain runs to 320 residues: Protein rlx (320 aa).

Its function is as follows. This protein is probably required for relaxation complex formation and plasmid mobilization by conjugative plasmids. This is Protein rlx (rlx) from Staphylococcus aureus.